The primary structure comprises 1150 residues: ATP-dependent helicase/deoxyribonuclease subunit B (1150 aa).

Residue 8 to 15 participates in ATP binding; sequence GRAGSGKS. The [4Fe-4S] cluster site is built by C789, C1109, C1112, and C1118.

This sequence belongs to the helicase family. AddB/RexB type 1 subfamily. Heterodimer of AddA and AddB. The cofactor is Mg(2+). [4Fe-4S] cluster is required as a cofactor.

The heterodimer acts as both an ATP-dependent DNA helicase and an ATP-dependent, dual-direction single-stranded exonuclease. Recognizes the chi site generating a DNA molecule suitable for the initiation of homologous recombination. The AddB subunit has 5' -&gt; 3' nuclease activity but not helicase activity. The chain is ATP-dependent helicase/deoxyribonuclease subunit B from Clostridium kluyveri (strain NBRC 12016).